Consider the following 385-residue polypeptide: Flap endonuclease 1 (385 aa).

Residues 1-105 (MGIKGLNAII…HELSKRSARR (105 aa)) form an N-domain region. D34 is a binding site for Mg(2+). Residues R47 and R71 each contribute to the DNA site. Mg(2+) contacts are provided by D87, E156, E158, D177, and D179. Positions 120 to 251 (EKLKHERRLV…VTALKLIKEH (132 aa)) are I-domain. DNA is bound at residue E156. Positions 229 and 231 each coordinate DNA. D231 is a Mg(2+) binding site. The interval 338–346 (VQGRLDGFF) is interaction with PCNA. Over residues 356 to 370 (LAAANAKAKSTKAGK) the composition is skewed to low complexity. The interval 356–385 (LAAANAKAKSTKAGKQATKGKVGKPGRPRK) is disordered. Residues 376–385 (KVGKPGRPRK) are compositionally biased toward basic residues.

This sequence belongs to the XPG/RAD2 endonuclease family. FEN1 subfamily. In terms of assembly, interacts with PCNA. Three molecules of FEN1 bind to one PCNA trimer with each molecule binding to one PCNA monomer. PCNA stimulates the nuclease activity without altering cleavage specificity. The cofactor is Mg(2+). Phosphorylated. Phosphorylation upon DNA damage induces relocalization to the nuclear plasma.

It is found in the nucleus. The protein resides in the nucleolus. Its subcellular location is the nucleoplasm. It localises to the mitochondrion. Structure-specific nuclease with 5'-flap endonuclease and 5'-3' exonuclease activities involved in DNA replication and repair. During DNA replication, cleaves the 5'-overhanging flap structure that is generated by displacement synthesis when DNA polymerase encounters the 5'-end of a downstream Okazaki fragment. It enters the flap from the 5'-end and then tracks to cleave the flap base, leaving a nick for ligation. Also involved in the long patch base excision repair (LP-BER) pathway, by cleaving within the apurinic/apyrimidinic (AP) site-terminated flap. Acts as a genome stabilization factor that prevents flaps from equilibrating into structures that lead to duplications and deletions. Also possesses 5'-3' exonuclease activity on nicked or gapped double-stranded DNA, and exhibits RNase H activity. Also involved in replication and repair of rDNA and in repairing mitochondrial DNA. The sequence is that of Flap endonuclease 1 from Lachancea thermotolerans (strain ATCC 56472 / CBS 6340 / NRRL Y-8284) (Yeast).